A 182-amino-acid chain; its full sequence is Isopentenyl-diphosphate Delta-isomerase (182 aa).

Residues histidine 25 and histidine 32 each contribute to the Mn(2+) site. The Nudix hydrolase domain maps to 30–164; it reads LLHLAFSSWL…PWAFSPWMVM (135 aa). Residue cysteine 67 is part of the active site. Residue histidine 69 coordinates Mn(2+). Glutamate 87 contributes to the Mg(2+) binding site. Residues glutamate 114 and glutamate 116 each contribute to the Mn(2+) site. Glutamate 116 is an active-site residue.

Belongs to the IPP isomerase type 1 family. In terms of assembly, homodimer. It depends on Mg(2+) as a cofactor. The cofactor is Mn(2+).

The protein localises to the cytoplasm. It carries out the reaction isopentenyl diphosphate = dimethylallyl diphosphate. The protein operates within isoprenoid biosynthesis; dimethylallyl diphosphate biosynthesis; dimethylallyl diphosphate from isopentenyl diphosphate: step 1/1. Functionally, catalyzes the 1,3-allylic rearrangement of the homoallylic substrate isopentenyl (IPP) to its highly electrophilic allylic isomer, dimethylallyl diphosphate (DMAPP). In Escherichia coli O7:K1 (strain IAI39 / ExPEC), this protein is Isopentenyl-diphosphate Delta-isomerase.